The sequence spans 359 residues: Pyruvate dehydrogenase E1 component subunit beta, mitochondrial (359 aa).

Residues 1–30 (MAAVSGLVRRPLREVSRLLKRRFHWTAPAA) constitute a mitochondrion transit peptide. Y67 bears the Phosphotyrosine mark. E89 provides a ligand contact to thiamine diphosphate. K(+) contacts are provided by I142, A190, I191, D193, and N195. K354 is subject to N6-acetyllysine.

As to quaternary structure, heterotetramer of two PDHA1 and two PDHB subunits. The heterotetramer interacts with DLAT, and is part of the multimeric pyruvate dehydrogenase complex that contains multiple copies of pyruvate dehydrogenase (E1), dihydrolipoamide acetyltransferase (DLAT, E2) and lipoamide dehydrogenase (DLD, E3). These subunits are bound to an inner core composed of about 48 DLAT and 12 PDHX molecules. Interacts with DLAT. The cofactor is thiamine diphosphate.

It localises to the mitochondrion matrix. The enzyme catalyses N(6)-[(R)-lipoyl]-L-lysyl-[protein] + pyruvate + H(+) = N(6)-[(R)-S(8)-acetyldihydrolipoyl]-L-lysyl-[protein] + CO2. In terms of biological role, the pyruvate dehydrogenase complex catalyzes the overall conversion of pyruvate to acetyl-CoA and CO(2), and thereby links the glycolytic pathway to the tricarboxylic cycle. This Pongo abelii (Sumatran orangutan) protein is Pyruvate dehydrogenase E1 component subunit beta, mitochondrial (PDHB).